We begin with the raw amino-acid sequence, 105 residues long: D-galactoside-specific lectin (105 aa).

The 91-residue stretch at 13 to 103 (VCEDSSLTIS…KYLAVTYICS (91 aa)) folds into the SUEL-type lectin domain.

In terms of assembly, homodimer; disulfide-linked.

It localises to the cytoplasm. In terms of biological role, this protein binds D-galactoside. May have an important role in the activation of eggs (triggered by fertilization), or in their subsequent differentiation. The dimeric form is essential for hemagglutination activity. In Heliocidaris crassispina (Sea urchin), this protein is D-galactoside-specific lectin.